Reading from the N-terminus, the 194-residue chain is Small ribosomal subunit protein uS4c (194 aa).

Residues 82–143 (MRLDNILFRL…KQRSKALIQD (62 aa)) form the S4 RNA-binding domain.

It belongs to the universal ribosomal protein uS4 family. In terms of assembly, part of the 30S ribosomal subunit. Contacts protein S5. The interaction surface between S4 and S5 is involved in control of translational fidelity.

Its subcellular location is the plastid. It is found in the chloroplast. Its function is as follows. One of the primary rRNA binding proteins, it binds directly to 16S rRNA where it nucleates assembly of the body of the 30S subunit. With S5 and S12 plays an important role in translational accuracy. The sequence is that of Small ribosomal subunit protein uS4c (rps4) from Bobartia gladiata (Sword rush-lily).